The primary structure comprises 547 residues: Chaperonin GroEL (547 aa).

ATP contacts are provided by residues 30-33, Lys51, 87-91, Gly415, 479-481, and Asp495; these read TLGP, DGTTT, and NAA. Residues 525-547 are disordered; that stretch reads PKEDKPDLGGGNPGGAGGMGGMM. The span at 532–547 shows a compositional bias: gly residues; sequence LGGGNPGGAGGMGGMM.

This sequence belongs to the chaperonin (HSP60) family. As to quaternary structure, forms a cylinder of 14 subunits composed of two heptameric rings stacked back-to-back. Interacts with the co-chaperonin GroES.

The protein resides in the cytoplasm. The enzyme catalyses ATP + H2O + a folded polypeptide = ADP + phosphate + an unfolded polypeptide.. Functionally, together with its co-chaperonin GroES, plays an essential role in assisting protein folding. The GroEL-GroES system forms a nano-cage that allows encapsulation of the non-native substrate proteins and provides a physical environment optimized to promote and accelerate protein folding. The polypeptide is Chaperonin GroEL (Blochmanniella floridana).